A 1202-amino-acid polypeptide reads, in one-letter code: Nucleolar protein 6 (1202 aa).

The interval 1-64 (MNKTKRKQQS…KKYKDNETNK (64 aa)) is disordered.

The protein belongs to the NRAP family. Part of the small subunit (SSU) processome, composed of more than 70 proteins and the RNA chaperone small nucleolar RNA (snoRNA) U3.

The protein localises to the nucleus. It localises to the nucleolus. The protein resides in the chromosome. Functionally, part of the small subunit (SSU) processome, first precursor of the small eukaryotic ribosomal subunit. During the assembly of the SSU processome in the nucleolus, many ribosome biogenesis factors, an RNA chaperone and ribosomal proteins associate with the nascent pre-rRNA and work in concert to generate RNA folding, modifications, rearrangements and cleavage as well as targeted degradation of pre-ribosomal RNA by the RNA exosome. The chain is Nucleolar protein 6 from Drosophila willistoni (Fruit fly).